Consider the following 586-residue polypeptide: 2-succinyl-5-enolpyruvyl-6-hydroxy-3-cyclohexene-1-carboxylate synthase (586 aa).

The protein belongs to the TPP enzyme family. MenD subfamily. Homodimer. The cofactor is Mg(2+). Mn(2+) is required as a cofactor. Requires thiamine diphosphate as cofactor.

It catalyses the reaction isochorismate + 2-oxoglutarate + H(+) = 5-enolpyruvoyl-6-hydroxy-2-succinyl-cyclohex-3-ene-1-carboxylate + CO2. Its pathway is quinol/quinone metabolism; 1,4-dihydroxy-2-naphthoate biosynthesis; 1,4-dihydroxy-2-naphthoate from chorismate: step 2/7. It functions in the pathway quinol/quinone metabolism; menaquinone biosynthesis. Functionally, catalyzes the thiamine diphosphate-dependent decarboxylation of 2-oxoglutarate and the subsequent addition of the resulting succinic semialdehyde-thiamine pyrophosphate anion to isochorismate to yield 2-succinyl-5-enolpyruvyl-6-hydroxy-3-cyclohexene-1-carboxylate (SEPHCHC). This Natronomonas pharaonis (strain ATCC 35678 / DSM 2160 / CIP 103997 / JCM 8858 / NBRC 14720 / NCIMB 2260 / Gabara) (Halobacterium pharaonis) protein is 2-succinyl-5-enolpyruvyl-6-hydroxy-3-cyclohexene-1-carboxylate synthase.